We begin with the raw amino-acid sequence, 540 residues long: Medium/long-chain-fatty-acid--[acyl-carrier-protein] ligase FadD10 (540 aa).

T177 is a binding site for Mg(2+). 3 residues coordinate ATP: I226, V316, and S320. Residue E321 participates in Mg(2+) binding. D408 is a binding site for ATP.

This sequence belongs to the ATP-dependent AMP-binding enzyme family. Homodimer. Mg(2+) serves as cofactor.

It is found in the cytoplasm. It carries out the reaction a medium-chain fatty acid + holo-[ACP] + ATP = a medium-chain fatty acyl-[ACP] + AMP + diphosphate. It catalyses the reaction a medium-chain fatty acid + ATP + H(+) = a medium-chain fatty acyl-AMP + diphosphate. The catalysed reaction is a medium-chain fatty acyl-AMP + holo-[ACP] = a medium-chain fatty acyl-[ACP] + AMP + H(+). The enzyme catalyses a long-chain fatty acid + holo-[ACP] + ATP = a long-chain fatty acyl-[ACP] + AMP + diphosphate. It carries out the reaction a long-chain fatty acid + ATP + H(+) = a long-chain fatty acyl-AMP + diphosphate. It catalyses the reaction a long-chain fatty acyl-AMP + holo-[ACP] = a long-chain fatty acyl-[ACP] + AMP + H(+). The catalysed reaction is a (2E)-enoyl fatty acid + holo-[ACP] + ATP = a (2E)-enoyl-[ACP] + AMP + diphosphate. The enzyme catalyses a (2E)-enoyl fatty acid + ATP + H(+) = a (2E)-2-fatty-enoyl-AMP + diphosphate. It carries out the reaction a (2E)-2-fatty-enoyl-AMP + holo-[ACP] = a (2E)-enoyl-[ACP] + AMP + H(+). It catalyses the reaction a (3R)-3-isocyanyl-fatty acid + holo-[ACP] + ATP = a (3R)-3-isocyanyl-fatty acyl-[ACP] + AMP + diphosphate. The catalysed reaction is a (3R)-3-isocyanyl-fatty acid + ATP + H(+) = a (3R)-3-isocyanyl-fatty acyl-AMP + diphosphate. The enzyme catalyses a (3R)-3-isocyanyl-fatty acyl-AMP + holo-[ACP] = a (3R)-3-isocyanyl-fatty acyl-[ACP] + AMP + H(+). Its pathway is lipid metabolism; fatty acid metabolism. In terms of biological role, acyl:acyl-carrier protein ligase involved in the biosynthesis of a unique class of isonitrile lipopeptides (INLPs) that seem to function as virulence factors in M.tuberculosis and to play a role in metal acquisition. Catalyzes the activation of medium/long-chain fatty acids as acyl-adenylates (acyl-AMP), which are then transferred to the phosphopantetheine arm of the acyl-carrier protein (ACP) MT0109. Acts twice during the INLP pathway, catalyzing the activation of a (2E)-enoyl fatty acid as well as the corresponding (3R)-3-isocyanyl-fatty acid as acyl-adenylates (acyl-AMP), and then the acyl transfer to the dedicated acyl-carrier protein MT0109. This Mycobacterium tuberculosis (strain CDC 1551 / Oshkosh) protein is Medium/long-chain-fatty-acid--[acyl-carrier-protein] ligase FadD10 (fadD10).